Consider the following 591-residue polypeptide: Probable methyltransferase PMT6 (591 aa).

Topologically, residues 1-13 (MRGSVIGAERSGQ) are cytoplasmic. Residues 14-34 (TIMVALVLMVGSFYTGSLFGT) form a helical; Signal-anchor for type II membrane protein membrane-spanning segment. Residues 35–591 (NQPIYVSHPS…FCRKRFWAII (557 aa)) are Lumenal-facing. 8 N-linked (GlcNAc...) asparagine glycosylation sites follow: Asn-87, Asn-99, Asn-146, Asn-193, Asn-323, Asn-436, Asn-473, and Asn-515.

It belongs to the methyltransferase superfamily.

The protein localises to the endoplasmic reticulum membrane. In Arabidopsis thaliana (Mouse-ear cress), this protein is Probable methyltransferase PMT6.